We begin with the raw amino-acid sequence, 455 residues long: MSHGASSRPATARKSSGLSGTVRIPGDKSISHRSFMFGGLASGETRITGLLEGEDVINTGKAMQAMGARIRKEGDTWIIDGVGNGGLLAPEAPLDFGNAATGCRLTMGLVGVYDFDSTFIGDASLTKRPMGRVLNPLREMGVQVKSEDGDRLPVTLRGPKTPTPITYRVPMASAQVKSAVLLAGLNTPGITTVIEPIMTRDHTEKMLQGFGANLTVETDADGVRTIRLEGRGKLTGQVIDVPGDPSSTAFPLVAALLVPGSDVTILNVLMNPTRTGLILTLQEMGADIEVINPRLAGGEDVADLRVRSSTLKGVTVPEDRAPSMIDEYPILAVAAAFAEGATVMNGLEELRVKESDRLSAVANGLKLNGVDCDEGETSLVVRGRPDGKGLGNASGAAVATHLDHRIAMSFLVMGLVSENPVTVDDATMIATSFPEFMDLMAGLGAKIELSDTKAA.

A compositionally biased stretch (polar residues) spans 1–19 (MSHGASSRPATARKSSGLS). The interval 1–25 (MSHGASSRPATARKSSGLSGTVRIP) is disordered. Lys-28 provides a ligand contact to phosphoenolpyruvate. Ser-29 and Arg-33 together coordinate 3-phosphoshikimate. Residue Arg-128 coordinates phosphoenolpyruvate. Positions 173, 174, 175, 326, and 353 each coordinate 3-phosphoshikimate. Position 175 (Gln-175) interacts with phosphoenolpyruvate. Asp-326 serves as the catalytic Proton acceptor. Phosphoenolpyruvate-binding residues include Arg-357 and Arg-405.

It belongs to the EPSP synthase family. As to quaternary structure, monomer.

Its subcellular location is the cytoplasm. The catalysed reaction is 3-phosphoshikimate + phosphoenolpyruvate = 5-O-(1-carboxyvinyl)-3-phosphoshikimate + phosphate. The protein operates within metabolic intermediate biosynthesis; chorismate biosynthesis; chorismate from D-erythrose 4-phosphate and phosphoenolpyruvate: step 6/7. With respect to regulation, is resistant to inhibition by glyphosate (glyphosate-tolerant) like other members of class II EPSPS, in contrast to class I EPSPS, which is glyphosate-sensitive. Is much less sensitive to inhibition by the (R)-difluoromethyl and (R)-phosphonate analogs of the tetrahedral reaction intermediate than the representative class I EPSPS from E.coli. Is highly activated in the presence of cations, such as NH4(+), Rb(+), and K(+). Catalyzes the transfer of the enolpyruvyl moiety of phosphoenolpyruvate (PEP) to the 5-hydroxyl of shikimate-3-phosphate (S3P) to produce enolpyruvyl shikimate-3-phosphate and inorganic phosphate. The chain is 3-phosphoshikimate 1-carboxyvinyltransferase from Agrobacterium sp. (strain CP4).